The chain runs to 185 residues: NAD(P)H-quinone oxidoreductase subunit J (185 aa).

This sequence belongs to the complex I 30 kDa subunit family. In terms of assembly, NDH-1 can be composed of about 15 different subunits; different subcomplexes with different compositions have been identified which probably have different functions.

The protein resides in the cellular thylakoid membrane. The catalysed reaction is a plastoquinone + NADH + (n+1) H(+)(in) = a plastoquinol + NAD(+) + n H(+)(out). It carries out the reaction a plastoquinone + NADPH + (n+1) H(+)(in) = a plastoquinol + NADP(+) + n H(+)(out). NDH-1 shuttles electrons from an unknown electron donor, via FMN and iron-sulfur (Fe-S) centers, to quinones in the respiratory and/or the photosynthetic chain. The immediate electron acceptor for the enzyme in this species is believed to be plastoquinone. Couples the redox reaction to proton translocation, and thus conserves the redox energy in a proton gradient. Cyanobacterial NDH-1 also plays a role in inorganic carbon-concentration. The polypeptide is NAD(P)H-quinone oxidoreductase subunit J (Prochlorococcus marinus (strain MIT 9303)).